The following is a 355-amino-acid chain: UDP-N-acetylglucosamine--N-acetylmuramyl-(pentapeptide) pyrophosphoryl-undecaprenol N-acetylglucosamine transferase (355 aa).

Residues 11–13, Asn-120, Arg-161, Ser-188, and Gln-280 contribute to the UDP-N-acetyl-alpha-D-glucosamine site; that span reads TGG.

The protein belongs to the glycosyltransferase 28 family. MurG subfamily.

The protein resides in the cell inner membrane. The enzyme catalyses di-trans,octa-cis-undecaprenyl diphospho-N-acetyl-alpha-D-muramoyl-L-alanyl-D-glutamyl-meso-2,6-diaminopimeloyl-D-alanyl-D-alanine + UDP-N-acetyl-alpha-D-glucosamine = di-trans,octa-cis-undecaprenyl diphospho-[N-acetyl-alpha-D-glucosaminyl-(1-&gt;4)]-N-acetyl-alpha-D-muramoyl-L-alanyl-D-glutamyl-meso-2,6-diaminopimeloyl-D-alanyl-D-alanine + UDP + H(+). It participates in cell wall biogenesis; peptidoglycan biosynthesis. Functionally, cell wall formation. Catalyzes the transfer of a GlcNAc subunit on undecaprenyl-pyrophosphoryl-MurNAc-pentapeptide (lipid intermediate I) to form undecaprenyl-pyrophosphoryl-MurNAc-(pentapeptide)GlcNAc (lipid intermediate II). The polypeptide is UDP-N-acetylglucosamine--N-acetylmuramyl-(pentapeptide) pyrophosphoryl-undecaprenol N-acetylglucosamine transferase (Prochlorococcus marinus (strain MIT 9211)).